Here is a 734-residue protein sequence, read N- to C-terminus: Ribosome-releasing factor 2, mitochondrial (734 aa).

The N-terminal 25 residues, 1–25 (MLQYCLLRRYRFLLRQHAQVIKRCY), are a transit peptide targeting the mitochondrion. One can recognise a tr-type G domain in the interval 27 to 303 (GDIRNIGILA…AVNAYLPMPE (277 aa)). Residues 36–43 (AHIDAGKT), 100–104 (DTPGH), and 154–157 (NKMD) each bind GTP.

This sequence belongs to the TRAFAC class translation factor GTPase superfamily. Classic translation factor GTPase family. EF-G/EF-2 subfamily.

The protein localises to the mitochondrion. Its function is as follows. Mitochondrial GTPase that mediates the disassembly of ribosomes from messenger RNA at the termination of mitochondrial protein biosynthesis. Not involved in the GTP-dependent ribosomal translocation step during translation elongation. In Drosophila grimshawi (Hawaiian fruit fly), this protein is Ribosome-releasing factor 2, mitochondrial.